A 250-amino-acid polypeptide reads, in one-letter code: MTTLIISDLHLDPLRPVVTELFLRFLREQVSGADALYILGDLFEVWIGDDMPSEVADMVAAALRTYADAGTPLYFMPGNRDFLVGADYAARAGFRILPDPCVVDLYGEPTLLLHGDLLCTDDIAYQAFRAQTRDPEFIAQFLTQTLSARLAFSQQARLASHAHQSGLKQENDSTQFEKITDVVPADVAAMFACYGVNRMIHGHTHRPALHMLQVAECACTRVVLGDWYQQGSVLCVDADGLVLEQLLLPG.

Residues D8, H10, D41, N79, and H114 each contribute to the Mn(2+) site. Position 79–80 (79–80 (NR)) interacts with substrate. The substrate site is built by D122, S160, D172, Q175, and H203. The Mn(2+) site is built by H203 and H205.

This sequence belongs to the LpxH family. Mn(2+) is required as a cofactor.

The protein resides in the cell inner membrane. The catalysed reaction is UDP-2-N,3-O-bis[(3R)-3-hydroxytetradecanoyl]-alpha-D-glucosamine + H2O = 2-N,3-O-bis[(3R)-3-hydroxytetradecanoyl]-alpha-D-glucosaminyl 1-phosphate + UMP + 2 H(+). The protein operates within glycolipid biosynthesis; lipid IV(A) biosynthesis; lipid IV(A) from (3R)-3-hydroxytetradecanoyl-[acyl-carrier-protein] and UDP-N-acetyl-alpha-D-glucosamine: step 4/6. Functionally, hydrolyzes the pyrophosphate bond of UDP-2,3-diacylglucosamine to yield 2,3-diacylglucosamine 1-phosphate (lipid X) and UMP by catalyzing the attack of water at the alpha-P atom. Involved in the biosynthesis of lipid A, a phosphorylated glycolipid that anchors the lipopolysaccharide to the outer membrane of the cell. The polypeptide is UDP-2,3-diacylglucosamine hydrolase (Xylella fastidiosa (strain M12)).